Reading from the N-terminus, the 122-residue chain is uncharacterized protein (122 aa).

The helical transmembrane segment at 93-113 threads the bilayer; the sequence is ILRICIVFLSLKIYTLTLVII.

The protein localises to the membrane. This is an uncharacterized protein from Saccharomyces cerevisiae (strain ATCC 204508 / S288c) (Baker's yeast).